We begin with the raw amino-acid sequence, 110 residues long: Secreted Ly-6/uPAR-related protein 1 (110 aa).

A signal peptide spans 1–22; the sequence is MTLRWAMWLLLLAAWSMGYGEA. In terms of domain architecture, UPAR/Ly6 spans 24 to 73; the sequence is RCYTCEQPTAINSCKNIAQCKMEDTACKTVLETVEAAFPFNHSPMVTRSC. Disulfide bonds link cysteine 25/cysteine 50, cysteine 28/cysteine 37, cysteine 43/cysteine 73, cysteine 77/cysteine 93, and cysteine 94/cysteine 99.

In terms of assembly, homodimer. Interacts with PLAU. Interacts with CHRNA7. As to expression, expressed in skin, eye, whole lung, trachea, esophagus and stomach. Widely expressed in various tissues including spleen and thymus but not pancreas. Expressed in macrophages, dendritic cells, T and B cells. Expressed in lung specifically in ciliated bronchial epithelial cells (at protein level). Expression is decreased in lungs of asthmatic model mice. Expressed in the cornea.

It localises to the secreted. In terms of biological role, has an antitumor activity. Was found to be a marker of late differentiation of the skin. Implicated in maintaining the physiological and structural integrity of the keratinocyte layers of the skin. In vitro down-regulates keratinocyte proliferation; the function may involve the proposed role as modulator of nicotinic acetylcholine receptors (nAChRs) activity. In vitro inhibits alpha-7-dependent nAChR currents in an allosteric manner. In T cells may be involved in regulation of intracellular Ca(2+) signaling. Seems to have a immunomodulatory function in the cornea. The function may implicate a possible role as a scavenger receptor for PLAU thereby blocking PLAU-dependent functions of PLAUR such as in cell migration and proliferation. The chain is Secreted Ly-6/uPAR-related protein 1 (Slurp1) from Mus musculus (Mouse).